Here is a 66-residue protein sequence, read N- to C-terminus: Cold shock protein CspC (66 aa).

A CSD domain is found at 4–63 (GTVKWFNAEKGFGFIERENGDDVFVHFSAIQSDGFKSLDEGQKVSFDVEQGARGAQAANV).

It localises to the cytoplasm. The protein is Cold shock protein CspC (cspC) of Bacillus subtilis (strain 168).